Consider the following 176-residue polypeptide: ATP-dependent protease subunit HslV (176 aa).

Residue Thr2 is part of the active site. Gly157, Cys160, and Thr163 together coordinate Na(+).

The protein belongs to the peptidase T1B family. HslV subfamily. As to quaternary structure, a double ring-shaped homohexamer of HslV is capped on each side by a ring-shaped HslU homohexamer. The assembly of the HslU/HslV complex is dependent on binding of ATP.

It is found in the cytoplasm. It catalyses the reaction ATP-dependent cleavage of peptide bonds with broad specificity.. Allosterically activated by HslU binding. In terms of biological role, protease subunit of a proteasome-like degradation complex believed to be a general protein degrading machinery. The polypeptide is ATP-dependent protease subunit HslV (Pseudomonas entomophila (strain L48)).